A 156-amino-acid polypeptide reads, in one-letter code: Class I hydrophobin B (156 aa).

The N-terminal stretch at 1 to 18 (MQFTLSAVVLALAGFSAA) is a signal peptide. Intrachain disulfides connect cysteine 52–cysteine 130, cysteine 60–cysteine 124, cysteine 61–cysteine 101, and cysteine 131–cysteine 149.

It belongs to the fungal hydrophobin family.

The protein localises to the secreted. It is found in the cell wall. Aerial growth, conidiation, and dispersal of filamentous fungi in the environment rely upon a capability of their secreting small amphipathic proteins called hydrophobins (HPBs) with low sequence identity. Class I can self-assemble into an outermost layer of rodlet bundles on aerial cell surfaces, conferring cellular hydrophobicity that supports fungal growth, development and dispersal; whereas Class II form highly ordered films at water-air interfaces through intermolecular interactions but contribute nothing to the rodlet structure. In P.expansum, hydrophobins contribute to germination, tolerance to cold stress and mycotoxins patulin and citrinin production. HfbA and HfbB are essential for fungal surface hydrophobicity. The polypeptide is Class I hydrophobin B (Penicillium expansum (Blue mold rot fungus)).